Reading from the N-terminus, the 178-residue chain is Large ribosomal subunit protein bL25 (178 aa).

The protein belongs to the bacterial ribosomal protein bL25 family. CTC subfamily. In terms of assembly, part of the 50S ribosomal subunit; part of the 5S rRNA/L5/L18/L25 subcomplex. Contacts the 5S rRNA. Binds to the 5S rRNA independently of L5 and L18.

This is one of the proteins that binds to the 5S RNA in the ribosome where it forms part of the central protuberance. The sequence is that of Large ribosomal subunit protein bL25 from Helicobacter pylori (strain ATCC 700392 / 26695) (Campylobacter pylori).